The chain runs to 526 residues: Cytochrome P450 monooxygenase milC (526 aa).

The chain crosses the membrane as a helical span at residues 2-20; it reads AIHAAYIFIAATLIALYVA. Residue Cys-470 participates in heme binding.

Belongs to the cytochrome P450 family. The cofactor is heme.

Its subcellular location is the membrane. It catalyses the reaction cordypyrone A + reduced [NADPH--hemoprotein reductase] + O2 = cordypyrone B + oxidized [NADPH--hemoprotein reductase] + H2O + H(+). It participates in secondary metabolite biosynthesis. In terms of biological role, cytochrome P450 monooxygenase; part of the gene cluster that mediates the biosynthesis of cordypyrones A and B, 2 pyrones that show modest activities against pathogenic bacteria including methicillin-resistant Staphylococcus aureus (MRSA), Mycobacterium tuberculosis and Bacillus cereus. The HR-PKS milA catalyzes the formation of cordypyrones A via condensation of one acetate with 10 malonate units. Since milA lacks an enoyl reductase domain, the 2 beta-keto processing domains DH and KR of milA collaborate with the trans-enoyl reductase milB to catalyze the different levels of reduction. The cytochrome P450 monooxygenase milC then hydroxylates the C-22 of cordypyrones A to yield cordypyrones B. The chain is Cytochrome P450 monooxygenase milC from Cordyceps militaris (strain CM01) (Caterpillar fungus).